Here is a 95-residue protein sequence, read N- to C-terminus: Ribonuclease kappa-B (95 aa).

2 consecutive transmembrane segments (helical) span residues 12–32 and 68–88; these read GLII…FFYI and CWIA…QFYV.

The protein belongs to the RNase K family.

The protein resides in the membrane. With respect to regulation, inhibited by Zn(2+) and Hg(2+), while it is unaffected by Ca(2+). Its function is as follows. Endoribonuclease which displays activity against poly(C) and poly(U) synthetic substrates, as well as rRNA. This chain is Ribonuclease kappa-B, found in Ceratitis capitata (Mediterranean fruit fly).